A 73-amino-acid polypeptide reads, in one-letter code: MKADIHPVYEAIDATCSCGNVIKTRSTLAAPLSLDVCNECHPFYTGKQKMLDVGGRVDKFKSRFGAFGATKAK.

Residues Cys16, Cys18, Cys37, and Cys40 each contribute to the Zn(2+) site.

The protein belongs to the bacterial ribosomal protein bL31 family. Type A subfamily. Part of the 50S ribosomal subunit. Requires Zn(2+) as cofactor.

Binds the 23S rRNA. The protein is Large ribosomal subunit protein bL31 of Pseudomonas syringae pv. syringae (strain B728a).